We begin with the raw amino-acid sequence, 164 residues long: UPF0114 protein YqhA (164 aa).

3 consecutive transmembrane segments (helical) span residues Leu15–Phe35, Leu53–Val73, and Leu136–Leu156.

The protein belongs to the UPF0114 family.

The protein resides in the cell membrane. This Escherichia coli O6:H1 (strain CFT073 / ATCC 700928 / UPEC) protein is UPF0114 protein YqhA.